The following is a 450-amino-acid chain: MREILHVQGGQCGNQIGSKFWEVICDEHGVDPTGKYNGDGSSDIQLERIDVYYNEASGGRYVPRAVLMDLEPGTMDSIRSGPIGQIFRPDNFVFGQSGAGNNWAKGHYTEGAELIDAVLDVVRKEAENCDCLQGFQVCHSLGGGTGSGMGTLLISKIREEYPDRMMMTFSVFPSPKVSDTVVEPYNATLSVHQLVENADECMVLDNEALYDICFRTLKLTTPSFGDLNHLISATMSGVTCCLRFPGQLNSDLRKLAVNLIPFPRLHFFMVGFAPLTSRGSQQYVSLTVPELTQQMWDAKNMMCAADPRHGRYLTASAMFRGKMSTKEVDEQMMNVQNKNSSYFVEWIPNNVKSSVCDIPPRGLKTSSTFIGNSTSIQEMFRRVSEQFTAMFRRKAFLHWYTGEGMDEMEFTEAESNMNDLVAEYQQYQDATVEDEEEYEGEEGLDENYET.

GTP contacts are provided by Q11, E71, S140, G144, T145, G146, N206, and N228. Residue E71 coordinates Mg(2+). Residues 429–450 (DATVEDEEEYEGEEGLDENYET) form a disordered region. The span at 431–450 (TVEDEEEYEGEEGLDENYET) shows a compositional bias: acidic residues.

The protein belongs to the tubulin family. As to quaternary structure, dimer of alpha and beta chains. A typical microtubule is a hollow water-filled tube with an outer diameter of 25 nm and an inner diameter of 15 nM. Alpha-beta heterodimers associate head-to-tail to form protofilaments running lengthwise along the microtubule wall with the beta-tubulin subunit facing the microtubule plus end conferring a structural polarity. Microtubules usually have 13 protofilaments but different protofilament numbers can be found in some organisms and specialized cells. It depends on Mg(2+) as a cofactor.

The protein resides in the cytoplasm. It localises to the cytoskeleton. In terms of biological role, tubulin is the major constituent of microtubules, a cylinder consisting of laterally associated linear protofilaments composed of alpha- and beta-tubulin heterodimers. Microtubules grow by the addition of GTP-tubulin dimers to the microtubule end, where a stabilizing cap forms. Below the cap, tubulin dimers are in GDP-bound state, owing to GTPase activity of alpha-tubulin. This Gossypium hirsutum (Upland cotton) protein is Tubulin beta-6 chain.